Reading from the N-terminus, the 1311-residue chain is Kinase and exchange factor for Rac A (1311 aa).

The Protein kinase domain maps to 18-316 (LVFKDIIGKG…STIVTILESI (299 aa)). ATP-binding positions include 24–32 (IGKGNFGCV) and Lys45. Asp138 functions as the Proton acceptor in the catalytic mechanism. 3 disordered regions span residues 169-201 (NGSD…KNNG), 360-426 (QQQS…TTTT), and 446-471 (PLSK…LIGS). The segment covering 451 to 471 (QQQQQRNQNSSIIDNNSLIGS) has biased composition (low complexity). In terms of domain architecture, IQ spans 650–679 (ELNLIIKLQSRIRGWLVRRRYKIFLSNWKL). In terms of domain architecture, DH spans 691–927 (QWIRLFNQLI…RETSNYIQSQ (237 aa)). Low complexity-rich tracts occupy residues 994-1021 (SKYN…TNSN) and 1031-1044 (STSN…GNNN). Disordered regions lie at residues 994-1044 (SKYN…GNNN), 1114-1145 (NNPN…NGSI), and 1208-1311 (GTST…FSKD). The segment covering 1117–1137 (NGGGSNNNSIGGGGGGRGGSG) has biased composition (gly residues). The span at 1208–1229 (GTSTPERKTSLVNMSPSTTSSL) shows a compositional bias: polar residues. A compositionally biased stretch (low complexity) spans 1230 to 1245 (NNIDSNYNNNNNNVTN). Residues 1246–1257 (TPIKSVTSSPSI) are compositionally biased toward polar residues. The span at 1263–1276 (NDNNQQPQLPSQPN) shows a compositional bias: low complexity. Over residues 1277 to 1287 (EEFQFTVPTTP) the composition is skewed to polar residues. A compositionally biased stretch (basic residues) spans 1290–1303 (KKKKRGSFSSKLKR).

This sequence belongs to the protein kinase superfamily. TKL Ser/Thr protein kinase family. It depends on Mg(2+) as a cofactor.

It carries out the reaction L-seryl-[protein] + ATP = O-phospho-L-seryl-[protein] + ADP + H(+). The enzyme catalyses L-threonyl-[protein] + ATP = O-phospho-L-threonyl-[protein] + ADP + H(+). This is Kinase and exchange factor for Rac A (kxcA) from Dictyostelium discoideum (Social amoeba).